Consider the following 298-residue polypeptide: MATH domain and coiled-coil domain-containing protein At3g58280 (298 aa).

The MATH domain occupies 9–128 (KKTFGWVIKD…NGEITIIAEV (120 aa)). Positions 240–288 (NLDWLRQKFDQALEKQIAYDTRIGELEKQVKKRKLAVTELEADLEKEKA) form a coiled coil.

This Arabidopsis thaliana (Mouse-ear cress) protein is MATH domain and coiled-coil domain-containing protein At3g58280.